We begin with the raw amino-acid sequence, 417 residues long: Inactive GDSL esterase/lipase-like protein 25 (417 aa).

A signal peptide spans 1 to 50 (MLLIPSFTANSNEPPPSKLSLSDLSMAILKSHFFLLFPLLLLHFHTVSFA). Asn160, Asn308, and Asn311 each carry an N-linked (GlcNAc...) asparagine glycan. Residue His331 is part of the active site.

This sequence belongs to the 'GDSL' lipolytic enzyme family. In terms of assembly, interacts with the PYK10 complex and TGG2, but not with TGG1 or PEN2. Expressed throughout the seedling, rosette leaves, roots, inflorescence and imbibed seed, but not in pollen.

The protein localises to the vacuole. The protein resides in the endoplasmic reticulum. Functionally, involved in organization of the endomembrane system and is required for endoplasmic reticulum morphology and organelle distribution. May act by inhibiting the formation of PYK10 complex by binding to GLL23 and exporting it from the ER. Required for proper subcellular localization of myrosinase TGG2. Has no lipase or esterase activity. This Arabidopsis thaliana (Mouse-ear cress) protein is Inactive GDSL esterase/lipase-like protein 25 (MVP1).